Here is a 511-residue protein sequence, read N- to C-terminus: Bifunctional purine biosynthesis protein PurH (511 aa).

Residues Met1–Val145 enclose the MGS-like domain.

Belongs to the PurH family.

The catalysed reaction is (6R)-10-formyltetrahydrofolate + 5-amino-1-(5-phospho-beta-D-ribosyl)imidazole-4-carboxamide = 5-formamido-1-(5-phospho-D-ribosyl)imidazole-4-carboxamide + (6S)-5,6,7,8-tetrahydrofolate. It catalyses the reaction IMP + H2O = 5-formamido-1-(5-phospho-D-ribosyl)imidazole-4-carboxamide. It participates in purine metabolism; IMP biosynthesis via de novo pathway; 5-formamido-1-(5-phospho-D-ribosyl)imidazole-4-carboxamide from 5-amino-1-(5-phospho-D-ribosyl)imidazole-4-carboxamide (10-formyl THF route): step 1/1. The protein operates within purine metabolism; IMP biosynthesis via de novo pathway; IMP from 5-formamido-1-(5-phospho-D-ribosyl)imidazole-4-carboxamide: step 1/1. This Bacillus cereus (strain G9842) protein is Bifunctional purine biosynthesis protein PurH.